We begin with the raw amino-acid sequence, 80 residues long: UPF0181 protein SG1330 (80 aa).

The segment at 58–80 (TEVLETPAARAETDPYDSNPDDD) is disordered.

It belongs to the UPF0181 family.

The polypeptide is UPF0181 protein SG1330 (Sodalis glossinidius (strain morsitans)).